The following is a 188-amino-acid chain: ATP synthase subunit delta (188 aa).

It belongs to the ATPase delta chain family. F-type ATPases have 2 components, F(1) - the catalytic core - and F(0) - the membrane proton channel. F(1) has five subunits: alpha(3), beta(3), gamma(1), delta(1), epsilon(1). F(0) has three main subunits: a(1), b(2) and c(10-14). The alpha and beta chains form an alternating ring which encloses part of the gamma chain. F(1) is attached to F(0) by a central stalk formed by the gamma and epsilon chains, while a peripheral stalk is formed by the delta and b chains.

It is found in the cell inner membrane. Functionally, f(1)F(0) ATP synthase produces ATP from ADP in the presence of a proton or sodium gradient. F-type ATPases consist of two structural domains, F(1) containing the extramembraneous catalytic core and F(0) containing the membrane proton channel, linked together by a central stalk and a peripheral stalk. During catalysis, ATP synthesis in the catalytic domain of F(1) is coupled via a rotary mechanism of the central stalk subunits to proton translocation. In terms of biological role, this protein is part of the stalk that links CF(0) to CF(1). It either transmits conformational changes from CF(0) to CF(1) or is implicated in proton conduction. This is ATP synthase subunit delta from Rhizobium meliloti (strain 1021) (Ensifer meliloti).